Here is a 169-residue protein sequence, read N- to C-terminus: Putative phosphoesterase SACOL1020 (169 aa).

The active-site Proton donor is the H34. Short sequence motifs (HXTX) lie at residues 34-37 and 115-118; these read HVTI and HFTI. H115 functions as the Proton acceptor in the catalytic mechanism.

The protein belongs to the 2H phosphoesterase superfamily. YjcG family.

The sequence is that of Putative phosphoesterase SACOL1020 from Staphylococcus aureus (strain COL).